The following is a 211-amino-acid chain: Transcription factor ces-2 (211 aa).

Residues 83–101 show a composition bias toward low complexity; sequence VSSRSSTVSSSHFSSPQRS. 2 disordered regions span residues 83–152 and 184–211; these read VSSR…HALE and NSEV…TIEV. Positions 111–152 are enriched in basic and acidic residues; sequence PEEKKDSAYFERRRKNNDAAKRSRDARRQKEEQIASKAHALE. Residues 116–179 enclose the bZIP domain; the sequence is DSAYFERRRK…AQLRFLLFSK (64 aa). Residues 122–140 are basic motif; sequence RRRKNNDAAKRSRDARRQK. The interval 144–172 is leucine-zipper; it reads IASKAHALERENMQLRGKVSSLEQEAAQL. Residues 190 to 200 show a composition bias toward low complexity; it reads ESNDSTETNDS. Basic and acidic residues predominate over residues 201–211; that stretch reads NDSKSDSTIEV.

Belongs to the bZIP family. In terms of assembly, interacts with NFIL3 transcription factor homolog atf-2.

Its subcellular location is the nucleus. Its function is as follows. Transcription factor. Required to activate programmed cell death in the sister cells of the serotoninergic neurosecretory motor (NSM) neurons. Negatively regulates the activity of ces-1 which in turn negatively regulates the activities of cell-killing genes. Binds to the DNA sequence 5'-RTTACGTAAY-3'. Involved in the development of the excretory duct cell, by positively modulating embryonic transcription of putative transcription factor lin-48, acting in concert with NFIL3 transcription factor homolog atf-2. Positively modulates expression of neuropeptide pigment dispersing factor homologs pdf-1 and pdf-2. In Caenorhabditis elegans, this protein is Transcription factor ces-2 (ces-2).